An 812-amino-acid polypeptide reads, in one-letter code: Endogenous retrovirus group K member 18 Pol protein (812 aa).

A Reverse transcriptase domain is found at 57–245; the sequence is LEKGHIEPSF…TPFHYLGMQI (189 aa). An LPQG motif is present at residues 161–164; sequence LPQG. The short motif at 195–198 is the YXDD element; sequence YFDD. The RNase H type-1 domain occupies 460–590; it reads LENALTVFTD…ADLLVSSAFI (131 aa). The Mg(2+) site is built by Asp-469, Glu-497, Asp-517, and Asp-582. Residues 587–628 form an Integrase-type zinc finger; the sequence is SAFIKAQELHALTHVNAAGLKNKFDVTWKQAKDIVQHCTQCQ. Positions 596, 600, 624, and 627 each coordinate Zn(2+). The Integrase catalytic domain occupies 637–803; the sequence is AGVNPEVCVL…TSAEHLTGKK (167 aa).

This sequence belongs to the beta type-B retroviral polymerase family. HERV class-II K(HML-2) pol subfamily.

The enzyme catalyses DNA(n) + a 2'-deoxyribonucleoside 5'-triphosphate = DNA(n+1) + diphosphate. It carries out the reaction Endonucleolytic cleavage to 5'-phosphomonoester.. In terms of biological role, early post-infection, the reverse transcriptase converts the viral RNA genome into double-stranded viral DNA. The RNase H domain of the reverse transcriptase performs two functions. It degrades the RNA template and specifically removes the RNA primer from the RNA/DNA hybrid. Following nuclear import, the integrase catalyzes the insertion of the linear, double-stranded viral DNA into the host cell chromosome. Endogenous Pol proteins may have kept, lost or modified their original function during evolution. The chain is Endogenous retrovirus group K member 18 Pol protein (ERVK-18) from Homo sapiens (Human).